Here is a 566-residue protein sequence, read N- to C-terminus: Membrane protein insertase YidC (566 aa).

5 helical membrane-spanning segments follow: residues 3 to 23 (IKRIILYVIVALLAIALFNAW), 346 to 366 (GWLWPISMLLFWILSAVHAVV), 369 to 389 (WGWSIIITTILIKIVFYWFSA), 436 to 456 (GGCLPMLIQVPVFIAFYYVII), and 509 to 529 (MWILPVIFTVFFINFPAGLVL).

This sequence belongs to the OXA1/ALB3/YidC family. Type 1 subfamily. As to quaternary structure, interacts with the Sec translocase complex via SecD. Specifically interacts with transmembrane segments of nascent integral membrane proteins during membrane integration.

It is found in the cell inner membrane. Required for the insertion and/or proper folding and/or complex formation of integral membrane proteins into the membrane. Involved in integration of membrane proteins that insert both dependently and independently of the Sec translocase complex, as well as at least some lipoproteins. Aids folding of multispanning membrane proteins. The sequence is that of Membrane protein insertase YidC from Coxiella burnetii (strain RSA 331 / Henzerling II).